The following is a 291-amino-acid chain: MAEISRIQYEMEYTEGISQRMRVPEKLKVAPPNADLEQEFQDGVPNASVIMQVPERIVVTGNNEDISFSRPADLDLIQSTPFKPLALKTPPRVLTLSERPLDFLDLERPLPTPQSEESRAVGRLKRERSMSENAVRQNGQLVRNDSIVTPSPPQARVCPPHMLPEDGANLSSARGILSLIQSSTRRAYQQILDVLDENRRPVLRGGSAAATSNPHHDNVRYGISNLDAAIEGASDDMTVVDAASLRRQIIKLNRRLQLLEEENKERAKREMVMYSITVAFWLLNSWLWFRR.

The Cytoplasmic segment spans residues 1-271; it reads MAEISRIQYE…ENKERAKREM (271 aa). Thr89 is modified (phosphothreonine). Residues 106–134 form a disordered region; that stretch reads LERPLPTPQSEESRAVGRLKRERSMSENA. 3 positions are modified to phosphoserine: Ser129, Ser131, and Ser146. Thr149 carries the phosphothreonine modification. 4 positions are modified to phosphoserine: Ser151, Ser178, Ser182, and Ser244. Residues 240-271 are a coiled coil; the sequence is VDAASLRRQIIKLNRRLQLLEEENKERAKREM. The helical; Anchor for type IV membrane protein transmembrane segment at 272 to 289 threads the bilayer; it reads VMYSITVAFWLLNSWLWF. The Mitochondrial intermembrane portion of the chain corresponds to 290–291; it reads RR.

The protein belongs to the Tango11 family. In terms of assembly, homodimer. Interacts with DNM1L. Interacts with C11orf65/MFI; the interaction inhibits MFF interaction with DNM1L.

It localises to the mitochondrion outer membrane. The protein localises to the peroxisome. Its subcellular location is the cytoplasmic vesicle. It is found in the secretory vesicle. The protein resides in the synaptic vesicle. Plays a role in mitochondrial and peroxisomal fission. Promotes the recruitment and association of the fission mediator dynamin-related protein 1 (DNM1L) to the mitochondrial surface. May be involved in regulation of synaptic vesicle membrane dynamics by recruitment of DNM1L to clathrin-containing vesicles. The polypeptide is Mitochondrial fission factor (Mff) (Mus musculus (Mouse)).